Here is a 468-residue protein sequence, read N- to C-terminus: Chromosomal replication initiator protein DnaA (468 aa).

The segment at 1–84 is domain I, interacts with DnaA modulators; the sequence is MSSSLWLQCL…RFEVGSRPVS (84 aa). Residues 80 to 106 are disordered; sequence SRPVSAPKPAPTRTPADVAAESSAPAQ. Residues 84–131 are domain II; it reads SAPKPAPTRTPADVAAESSAPAQLQARKPVHKTWDDDPQAIAAINHRS. Positions 132–348 are domain III, AAA+ region; sequence NMNPKHKFDN…GALNRVIANA (217 aa). Residues G176, G178, K179, and T180 each contribute to the ATP site. Residues 349–468 are domain IV, binds dsDNA; sequence NFTGRPITID…YSNLIRTLSS (120 aa).

This sequence belongs to the DnaA family. In terms of assembly, oligomerizes as a right-handed, spiral filament on DNA at oriC.

It is found in the cytoplasm. Plays an essential role in the initiation and regulation of chromosomal replication. ATP-DnaA binds to the origin of replication (oriC) to initiate formation of the DNA replication initiation complex once per cell cycle. Binds the DnaA box (a 9 base pair repeat at the origin) and separates the double-stranded (ds)DNA. Forms a right-handed helical filament on oriC DNA; dsDNA binds to the exterior of the filament while single-stranded (ss)DNA is stabiized in the filament's interior. The ATP-DnaA-oriC complex binds and stabilizes one strand of the AT-rich DNA unwinding element (DUE), permitting loading of DNA polymerase. After initiation quickly degrades to an ADP-DnaA complex that is not apt for DNA replication. Binds acidic phospholipids. This chain is Chromosomal replication initiator protein DnaA, found in Vibrio parahaemolyticus serotype O3:K6 (strain RIMD 2210633).